Consider the following 311-residue polypeptide: Interleukin-20 receptor subunit beta (311 aa).

The N-terminal stretch at 1–29 (MQTFTMVLEEIWTSLFMWFFYALIPCLLT) is a signal peptide. Residues 30–233 (DEVAILPAPQ…VEVQGEAIPL (204 aa)) lie on the Extracellular side of the membrane. 2 consecutive Fibronectin type-III domains span residues 37 to 136 (APQN…RNST) and 144 to 228 (EITK…EVQG). A glycan (N-linked (GlcNAc...) asparagine) is linked at N40. A disulfide bridge links C89 with C97. Residue N134 is glycosylated (N-linked (GlcNAc...) asparagine). The cysteines at positions 202 and 223 are disulfide-linked. The chain crosses the membrane as a helical span at residues 234–254 (VLALFAFVGFMLILVVVPLFV). Residues 255–311 (WKMGRLLQYSCCPVVVLPDTLKITNSPQKLISCRREEVDACATAVMSPEELLRAWIS) are Cytoplasmic-facing.

Belongs to the type II cytokine receptor family. As to quaternary structure, heterodimer with IL20RA and heterodimer with IL22RA1. In terms of tissue distribution, widely expressed with highest levels in skin and testis. Highly expressed in psoriatic skin.

It is found in the membrane. Functionally, the IL20RA/IL20RB dimer is a receptor for IL19, IL20 and IL24. The IL22RA1/IL20RB dimer is a receptor for IL20 and IL24. The chain is Interleukin-20 receptor subunit beta (IL20RB) from Homo sapiens (Human).